The following is a 737-amino-acid chain: Oligopeptide transporter 3 (737 aa).

16 helical membrane passes run 45 to 65 (AWFLGLTSCVLLIFLNTFFTY), 69 to 89 (PLTISAILMQIAVLPIGKFMA), 117 to 137 (VIITIFANCGVAYGGGDAYSI), 153 to 173 (FICGLFIVLTTQILGYGWAGI), 215 to 235 (FLVALGASFIYYALPGYLFPI), 255 to 275 (VGSGYHGLGVGAFTLDWAGIS), 289 to 309 (ILNVGVGFIMFIYIIVPVCYW), 357 to 377 (LYLSPLFALSIGSGFARFTAT), 418 to 438 (WWFYILLAGSVAMSLLMSFVW), 446 to 466 (WWGMLFAFALAFIVTLPIGVI), 478 to 498 (IIGQFIIGYILPGKPIANLIF), 532 to 552 (AQLVGTVVAGVVNLGVAWWML), 604 to 624 (VWLFLIGAVLPVPVWALSKIF), 629 to 649 (WIPLINIPVISYGFAGMPPAT), 650 to 670 (PTNIASWLVTGTIFNYFVFNY), and 681 to 701 (VLSAALDAGTAFMGVLLFFAL).

This sequence belongs to the oligopeptide OPT transporter (TC 2.A.67.1) family. Strong expression in flowers, leaves and roots. Preferentially expressed in the vascular tissues of seedlings and mature plants as well as in pollen and developing embryos.

The protein resides in the membrane. Its function is as follows. May be involved in the translocation of tetra- and pentapeptides across the cellular membrane in an energy-dependent manner. Also acts as a metal transporter that could be a component of the copper transport machinery. Essential for early embryo development. The sequence is that of Oligopeptide transporter 3 (OPT3) from Arabidopsis thaliana (Mouse-ear cress).